The chain runs to 552 residues: Probable bifunctional methylthioribose-1-phosphate isomerase/methylthioribulose-1-phosphate dehydratase (552 aa).

Positions 1–333 (MRPIDDSSLT…VVTEHGVVHG (333 aa)) are methylthioribose-1-phosphate isomerase activity. Residues 49 to 51 (RGA), R91, and Q195 each bind substrate. The active-site Proton donor is the D236. Position 246-247 (246-247 (NK)) interacts with substrate. A methylthioribulose-1-phosphate dehydratase activity region spans residues 334–535 (TVAAEPGARI…AVCELVLRTG (202 aa)). H427 and H429 together coordinate Zn(2+).

The protein in the N-terminal section; belongs to the eIF-2B alpha/beta/delta subunits family. MtnA subfamily. In the C-terminal section; belongs to the aldolase class II family. MtnB subfamily. It depends on Zn(2+) as a cofactor.

It carries out the reaction 5-(methylsulfanyl)-alpha-D-ribose 1-phosphate = 5-(methylsulfanyl)-D-ribulose 1-phosphate. The enzyme catalyses 5-(methylsulfanyl)-D-ribulose 1-phosphate = 5-methylsulfanyl-2,3-dioxopentyl phosphate + H2O. The protein operates within amino-acid biosynthesis; L-methionine biosynthesis via salvage pathway; L-methionine from S-methyl-5-thio-alpha-D-ribose 1-phosphate: step 1/6. It functions in the pathway amino-acid biosynthesis; L-methionine biosynthesis via salvage pathway; L-methionine from S-methyl-5-thio-alpha-D-ribose 1-phosphate: step 2/6. Functionally, bifunctional protein that catalyzes the interconversion of methylthioribose-1-phosphate (MTR-1-P) into methylthioribulose-1-phosphate (MTRu-1-P), and the dehydration of methylthioribulose-1-phosphate (MTRu-1-P) into 2,3-diketo-5-methylthiopentyl-1-phosphate (DK-MTP-1-P). The sequence is that of Probable bifunctional methylthioribose-1-phosphate isomerase/methylthioribulose-1-phosphate dehydratase (mtnAB) from Nocardia farcinica (strain IFM 10152).